The primary structure comprises 364 residues: LFHPEQLISGKEDAANNFARGHYTVGKEIVDLCLDRVRKLSDNCTGLQGFLVFNAVGGGTGSGLGSLLLERLSVDYGKKSKLGFTIYPSPQVSTAVVEPYNSVLSTHSLLEHTDVAVLLDNEAIYDICRRSLLDIERPTYTNLNRLVSQIISSLTTSLRFDGALNVDVTEFQTNLVPYPRIHFMLSSYAPVISAAKAYHEQLSVPEITNAVFEPSSMMAKCDPRHGKYMACCLMYRGDVVPKDVNAAVATIKTKRTVQFVDWCPTGFKCGINYQPPSVVPGGDLAKVQRAVCMISNNTAVAEVFSRIDHKFDLMYAKLAFVHWYVGEGMEEGEFSEAREDLAALEKDYEEVAAEGVDEPEGDDY.

GTP contacts are provided by Gly59, Thr60, Thr94, Asn121, and Asn144. The active site involves Glu170.

This sequence belongs to the tubulin family. Dimer of alpha and beta chains. A typical microtubule is a hollow water-filled tube with an outer diameter of 25 nm and an inner diameter of 15 nM. Alpha-beta heterodimers associate head-to-tail to form protofilaments running lengthwise along the microtubule wall with the beta-tubulin subunit facing the microtubule plus end conferring a structural polarity. Microtubules usually have 13 protofilaments but different protofilament numbers can be found in some organisms and specialized cells. Mg(2+) is required as a cofactor. Undergoes a tyrosination/detyrosination cycle, the cyclic removal and re-addition of a C-terminal tyrosine residue by the enzymes tubulin tyrosine carboxypeptidase (TTCP) and tubulin tyrosine ligase (TTL), respectively.

The protein resides in the cytoplasm. It localises to the cytoskeleton. The enzyme catalyses GTP + H2O = GDP + phosphate + H(+). Its function is as follows. Tubulin is the major constituent of microtubules, a cylinder consisting of laterally associated linear protofilaments composed of alpha- and beta-tubulin heterodimers. Microtubules grow by the addition of GTP-tubulin dimers to the microtubule end, where a stabilizing cap forms. Below the cap, tubulin dimers are in GDP-bound state, owing to GTPase activity of alpha-tubulin. In Anemia phyllitidis (Fern), this protein is Tubulin alpha-2 chain (TUBA2).